A 277-amino-acid chain; its full sequence is (-)-trans-carveol dehydrogenase (277 aa).

10–32 (LITGAARGQGRSHAIKLAEEGAD) contributes to the NAD(+) binding site. S156 is a binding site for substrate. Y169 functions as the Proton acceptor in the catalytic mechanism.

This sequence belongs to the short-chain dehydrogenases/reductases (SDR) family. Homotetramer.

It carries out the reaction (1S,5R)-carveol + NAD(+) = (R)-carvone + NADH + H(+). It catalyses the reaction (1S,5S)-carveol + NAD(+) = (S)-carvone + NADH + H(+). Its pathway is terpene metabolism; limonene degradation. With respect to regulation, competitively inhibited by the product (S)- or (R)-carvone. Its function is as follows. Catalyzes the oxidation of carveol to carvone, with a strong stereoselectivity since it efficiently converts only the (6S)-stereoisomers, of which (-)-(4R,6S)-trans-carveol is the better substrate. Displays a broad substrate specificity with a preference for substituted cyclohexanols, and does not catalyze the oxidation of primary or short chain aliphatic secondary alcohols. Is also able, albeit more slowly, to oxidize limonene-1,2-diol into 1-hydroxy-2-oxolimonene. This Rhodococcus erythropolis (Arthrobacter picolinophilus) protein is (-)-trans-carveol dehydrogenase (limC).